We begin with the raw amino-acid sequence, 295 residues long: Acetylglutamate kinase (295 aa).

Substrate is bound by residues 64 to 65, Arg86, and Asn190; that span reads GG.

The protein belongs to the acetylglutamate kinase family. ArgB subfamily.

It is found in the cytoplasm. The catalysed reaction is N-acetyl-L-glutamate + ATP = N-acetyl-L-glutamyl 5-phosphate + ADP. The protein operates within amino-acid biosynthesis; L-arginine biosynthesis; N(2)-acetyl-L-ornithine from L-glutamate: step 2/4. Catalyzes the ATP-dependent phosphorylation of N-acetyl-L-glutamate. The protein is Acetylglutamate kinase of Heliobacterium modesticaldum (strain ATCC 51547 / Ice1).